The sequence spans 443 residues: Transcriptional adapter 2-alpha (443 aa).

Position 6 is a phosphoserine; in variant Ser-6 (P6). Residues 12–69 form a ZZ-type zinc finger; it reads SDKPPCRGCSSYLMEPYIKCAECGPPPFFLCLQCFTRGFEYKKHQSDHTYEIMTSDFP. Residues C17, C20, C31, C34, C42, C45, H55, and H59 each coordinate Zn(2+). The region spanning 70-122 is the SANT domain; that stretch reads VLDPSWTAQEEMALLEAVMDCGFGNWQDVANQMCTKTKEECEKHYMKHFINNP. Glycyl lysine isopeptide (Lys-Gly) (interchain with G-Cter in SUMO2) cross-links involve residues K132 and K138. A disordered region spans residues 348–372; it reads SPSIPMASNSGRRSAPPLNLTGLPG. The SWIRM domain occupies 356–443; sequence NSGRRSAPPL…LIREGYITKG (88 aa). The DNA-binding element occupies 426 to 435; that stretch reads KTRKIYDFLI.

As to quaternary structure, interacts with GCN5 and NR3C1. Associated with the P/CAF protein in the PCAF complex. Component of the PCAF complex, at least composed of TADA2L/ADA2, TADA3L/ADA3, TAF5L/PAF65-beta, TAF6L/PAF65-alpha, TAF10/TAFII30, TAF12/TAFII20, TAF9/TAFII31 and TRRAP. Component of the ADA2A-containing complex (ATAC), composed of KAT14, KAT2A, TADA2L, TADA3L, ZZ3, MBIP, WDR5, YEATS2, CCDC101 and DR1. Interacts with CCDC134. Expressed in all tissues, but most abundantly in testis.

The protein resides in the nucleus. The protein localises to the chromosome. In terms of biological role, component of the ATAC complex, a complex with histone acetyltransferase activity on histones H3 and H4. Required for the function of some acidic activation domains, which activate transcription from a distant site. Binds double-stranded DNA. Binds dinucleosomes, probably at the linker region between neighboring nucleosomes. Plays a role in chromatin remodeling. May promote TP53/p53 'Lys-321' acetylation, leading to reduced TP53 stability and transcriptional activity. May also promote XRCC6 acetylation thus facilitating cell apoptosis in response to DNA damage. The sequence is that of Transcriptional adapter 2-alpha (TADA2A) from Homo sapiens (Human).